Here is a 691-residue protein sequence, read N- to C-terminus: Protein phosphatase Slingshot homolog (691 aa).

Residues 236 to 291 (EETERIIKLKLRDILRESDLENITSKEVRSALEQHTLCALQDYKEFIDNEMIIILA) enclose the DEK-C domain. The region spanning 295–436 (RPSEIFPYLY…LQTYQGILGA (142 aa)) is the Tyrosine-protein phosphatase domain. Cys380 serves as the catalytic Phosphocysteine intermediate. The stretch at 532–580 (NEHVLSKEQIIQEEKKVMELEKGPEWVVKNNVLEEMKETEERELPNFEL) forms a coiled coil. The tract at residues 585 to 620 (NQSRERDQETIKESSVITQGSSSLDEVFESSTPTRS) is disordered. Over residues 587-596 (SRERDQETIK) the composition is skewed to basic and acidic residues. A compositionally biased stretch (polar residues) spans 597–619 (ESSVITQGSSSLDEVFESSTPTR).

The protein belongs to the protein-tyrosine phosphatase family. In terms of assembly, interacts with actin and this stimulates phosphatase activity.

The protein localises to the cytoplasm. It localises to the cytoskeleton. The protein resides in the cleavage furrow. It is found in the midbody. It catalyses the reaction O-phospho-L-tyrosyl-[protein] + H2O = L-tyrosyl-[protein] + phosphate. The enzyme catalyses O-phospho-L-seryl-[protein] + H2O = L-seryl-[protein] + phosphate. It carries out the reaction O-phospho-L-threonyl-[protein] + H2O = L-threonyl-[protein] + phosphate. Functionally, protein phosphatase which regulates actin filament dynamics. Dephosphorylates and activates the actin binding/depolymerizing factor cofilin, which subsequently binds to actin filaments and stimulates their disassembly. Required for completion of the gastrulation movement and for cytokinesis. The sequence is that of Protein phosphatase Slingshot homolog (ssh) from Xenopus laevis (African clawed frog).